A 450-amino-acid chain; its full sequence is tRNA-2-methylthio-N(6)-dimethylallyladenosine synthase (450 aa).

An MTTase N-terminal domain is found at 14 to 132 (GEFFIETWGC…FPNYLNEVKK (119 aa)). Residues cysteine 23, cysteine 59, cysteine 93, cysteine 169, cysteine 173, and cysteine 176 each coordinate [4Fe-4S] cluster. A Radical SAM core domain is found at 155–385 (RKNSMKAFVT…VEVVNEISAK (231 aa)). In terms of domain architecture, TRAM spans 388-450 (KAYEGKIEEV…NSFSLTGEEI (63 aa)).

This sequence belongs to the methylthiotransferase family. MiaB subfamily. In terms of assembly, monomer. The cofactor is [4Fe-4S] cluster.

Its subcellular location is the cytoplasm. The catalysed reaction is N(6)-dimethylallyladenosine(37) in tRNA + (sulfur carrier)-SH + AH2 + 2 S-adenosyl-L-methionine = 2-methylsulfanyl-N(6)-dimethylallyladenosine(37) in tRNA + (sulfur carrier)-H + 5'-deoxyadenosine + L-methionine + A + S-adenosyl-L-homocysteine + 2 H(+). Functionally, catalyzes the methylthiolation of N6-(dimethylallyl)adenosine (i(6)A), leading to the formation of 2-methylthio-N6-(dimethylallyl)adenosine (ms(2)i(6)A) at position 37 in tRNAs that read codons beginning with uridine. This is tRNA-2-methylthio-N(6)-dimethylallyladenosine synthase from Clostridium botulinum (strain Loch Maree / Type A3).